The sequence spans 107 residues: Nucleoid-associated protein BAbS19_I00290 (107 aa).

It belongs to the YbaB/EbfC family. In terms of assembly, homodimer.

The protein localises to the cytoplasm. It localises to the nucleoid. Its function is as follows. Binds to DNA and alters its conformation. May be involved in regulation of gene expression, nucleoid organization and DNA protection. In Brucella abortus (strain S19), this protein is Nucleoid-associated protein BAbS19_I00290.